The primary structure comprises 213 residues: Germin-like protein 8-14 (213 aa).

Positions 1-23 are cleaved as a signal peptide; sequence MAKAVMMLPVLLSFLLLPFSSMA. A disulfide bridge links cysteine 29 with cysteine 44. A Cupin type-1 domain is found at 56–203; sequence HGLAAAGNTS…VTFLDDAQVK (148 aa). Asparagine 63 carries N-linked (GlcNAc...) asparagine glycosylation. Mn(2+) contacts are provided by histidine 104, histidine 106, glutamate 111, and histidine 151.

The protein belongs to the germin family. As to quaternary structure, oligomer (believed to be a pentamer but probably hexamer). In terms of processing, phosphorylated on threonine residue.

It localises to the secreted. The protein resides in the extracellular space. Its subcellular location is the apoplast. Its function is as follows. May play a role in plant defense. Probably has no oxalate oxidase activity even if the active site is conserved. The protein is Germin-like protein 8-14 (GER5) of Oryza sativa subsp. japonica (Rice).